We begin with the raw amino-acid sequence, 307 residues long: MVTATHPHSLGKLSRIRHLARQYAALTKPRVTQLAVFCAIIGMFLATPGMVPWRVLIGGAAGIWLLAGAAFAINCLVEQKIDALMRRTAWRPSATGEITTPQTLVFSAILGGAGMWLLHVYANDLTMWLTFATFLGYAVVYTILLKPATPQNIVIGGLSGAMPPALGWAAVAGEVPAEAWFLVLIIFTWTPPHFWALALYRRADYAKSGLPMLPVTHGERYTLLHILLYTLIMIAATLLPFVYGMSGYIYLAAALALGAGFLAYAWKMYRNYSDELAQRAFRFSILYLSLLFAALLVDHYFKFVPQV.

9 helical membrane passes run 31–51 (VTQL…PGMV), 55–75 (VLIG…AINC), 103–123 (TLVF…VYAN), 125–145 (LTMW…TILL), 153–173 (IVIG…AVAG), 179–199 (AWFL…ALAL), 223–243 (LLHI…PFVY), 246–266 (SGYI…AYAW), and 285–305 (ILYL…KFVP).

This sequence belongs to the UbiA prenyltransferase family. Protoheme IX farnesyltransferase subfamily.

Its subcellular location is the cell inner membrane. It catalyses the reaction heme b + (2E,6E)-farnesyl diphosphate + H2O = Fe(II)-heme o + diphosphate. The protein operates within porphyrin-containing compound metabolism; heme O biosynthesis; heme O from protoheme: step 1/1. Converts heme B (protoheme IX) to heme O by substitution of the vinyl group on carbon 2 of heme B porphyrin ring with a hydroxyethyl farnesyl side group. The protein is Protoheme IX farnesyltransferase of Cupriavidus necator (strain ATCC 17699 / DSM 428 / KCTC 22496 / NCIMB 10442 / H16 / Stanier 337) (Ralstonia eutropha).